The sequence spans 529 residues: Bifunctional purine biosynthesis protein PurH (529 aa).

Residues 1–148 enclose the MGS-like domain; sequence MQQRRPVRRA…KNHKDVAIVV (148 aa). Lys287 carries the N6-acetyllysine modification.

This sequence belongs to the PurH family.

The enzyme catalyses (6R)-10-formyltetrahydrofolate + 5-amino-1-(5-phospho-beta-D-ribosyl)imidazole-4-carboxamide = 5-formamido-1-(5-phospho-D-ribosyl)imidazole-4-carboxamide + (6S)-5,6,7,8-tetrahydrofolate. It catalyses the reaction IMP + H2O = 5-formamido-1-(5-phospho-D-ribosyl)imidazole-4-carboxamide. It functions in the pathway purine metabolism; IMP biosynthesis via de novo pathway; 5-formamido-1-(5-phospho-D-ribosyl)imidazole-4-carboxamide from 5-amino-1-(5-phospho-D-ribosyl)imidazole-4-carboxamide (10-formyl THF route): step 1/1. The protein operates within purine metabolism; IMP biosynthesis via de novo pathway; IMP from 5-formamido-1-(5-phospho-D-ribosyl)imidazole-4-carboxamide: step 1/1. The sequence is that of Bifunctional purine biosynthesis protein PurH from Escherichia coli O45:K1 (strain S88 / ExPEC).